Here is a 371-residue protein sequence, read N- to C-terminus: Chorismate synthase (371 aa).

NADP(+)-binding residues include Arg-48 and Arg-54. FMN-binding positions include 130–132 (RSS), 242–243 (NA), Gly-287, 302–306 (KPTSS), and Arg-328.

Belongs to the chorismate synthase family. As to quaternary structure, homotetramer. FMNH2 serves as cofactor.

The catalysed reaction is 5-O-(1-carboxyvinyl)-3-phosphoshikimate = chorismate + phosphate. The protein operates within metabolic intermediate biosynthesis; chorismate biosynthesis; chorismate from D-erythrose 4-phosphate and phosphoenolpyruvate: step 7/7. Catalyzes the anti-1,4-elimination of the C-3 phosphate and the C-6 proR hydrogen from 5-enolpyruvylshikimate-3-phosphate (EPSP) to yield chorismate, which is the branch point compound that serves as the starting substrate for the three terminal pathways of aromatic amino acid biosynthesis. This reaction introduces a second double bond into the aromatic ring system. The protein is Chorismate synthase of Azorhizobium caulinodans (strain ATCC 43989 / DSM 5975 / JCM 20966 / LMG 6465 / NBRC 14845 / NCIMB 13405 / ORS 571).